We begin with the raw amino-acid sequence, 121 residues long: Large ribosomal subunit protein bL12 (121 aa).

Belongs to the bacterial ribosomal protein bL12 family. As to quaternary structure, homodimer. Part of the ribosomal stalk of the 50S ribosomal subunit. Forms a multimeric L10(L12)X complex, where L10 forms an elongated spine to which 2 to 4 L12 dimers bind in a sequential fashion. Binds GTP-bound translation factors.

Forms part of the ribosomal stalk which helps the ribosome interact with GTP-bound translation factors. Is thus essential for accurate translation. The protein is Large ribosomal subunit protein bL12 of Clostridium novyi (strain NT).